Reading from the N-terminus, the 114-residue chain is Putative pterin-4-alpha-carbinolamine dehydratase (114 aa).

This sequence belongs to the pterin-4-alpha-carbinolamine dehydratase family.

It catalyses the reaction (4aS,6R)-4a-hydroxy-L-erythro-5,6,7,8-tetrahydrobiopterin = (6R)-L-erythro-6,7-dihydrobiopterin + H2O. This Pseudoalteromonas translucida (strain TAC 125) protein is Putative pterin-4-alpha-carbinolamine dehydratase.